A 296-amino-acid chain; its full sequence is NADH-cytochrome b5 reductase 2 (296 aa).

Residues 2-24 (LVALAAIGVTVLLFLIKALGSGA) traverse the membrane as a helical segment. Residues 35-147 (NAKYPLPLIE…RGPNGLLVYK (113 aa)) enclose the FAD-binding FR-type domain. Residues 127–142 (DSLK…GPNG) and 166–201 (VAKH…KCYL) contribute to the FAD site.

Belongs to the flavoprotein pyridine nucleotide cytochrome reductase family. FAD serves as cofactor.

The protein resides in the membrane. The enzyme catalyses 2 Fe(III)-[cytochrome b5] + NADH = 2 Fe(II)-[cytochrome b5] + NAD(+) + H(+). NADH-cytochrome b5 reductases are involved in desaturation and elongation of fatty acids, cholesterol biosynthesis and drug metabolism. This Xenopus laevis (African clawed frog) protein is NADH-cytochrome b5 reductase 2 (cyb5r2).